The chain runs to 450 residues: Adenylosuccinate lyase (450 aa).

N(6)-(1,2-dicarboxyethyl)-AMP is bound by residues 9-10, 75-77, and 101-102; these read RY, HHD, and TS. His-149 functions as the Proton donor/acceptor in the catalytic mechanism. A N(6)-(1,2-dicarboxyethyl)-AMP-binding site is contributed by Gln-223. Residue Ser-273 is the Proton donor/acceptor of the active site. Residues Ser-274, 279–281, and 318–322 each bind N(6)-(1,2-dicarboxyethyl)-AMP; these read KRN and SVERV.

Belongs to the lyase 1 family. Adenylosuccinate lyase subfamily. In terms of assembly, homotetramer. Residues from neighboring subunits contribute catalytic and substrate-binding residues to each active site.

It carries out the reaction N(6)-(1,2-dicarboxyethyl)-AMP = fumarate + AMP. It catalyses the reaction (2S)-2-[5-amino-1-(5-phospho-beta-D-ribosyl)imidazole-4-carboxamido]succinate = 5-amino-1-(5-phospho-beta-D-ribosyl)imidazole-4-carboxamide + fumarate. It functions in the pathway purine metabolism; AMP biosynthesis via de novo pathway; AMP from IMP: step 2/2. The protein operates within purine metabolism; IMP biosynthesis via de novo pathway; 5-amino-1-(5-phospho-D-ribosyl)imidazole-4-carboxamide from 5-amino-1-(5-phospho-D-ribosyl)imidazole-4-carboxylate: step 2/2. Catalyzes two reactions in de novo purine nucleotide biosynthesis. Catalyzes the breakdown of 5-aminoimidazole- (N-succinylocarboxamide) ribotide (SAICAR or 2-[5-amino-1-(5-phospho-beta-D-ribosyl)imidazole-4-carboxamido]succinate) to 5-aminoimidazole-4-carboxamide ribotide (AICAR or 5-amino-1-(5-phospho-beta-D-ribosyl)imidazole-4-carboxamide) and fumarate, and of adenylosuccinate (ADS or N(6)-(1,2-dicarboxyethyl)-AMP) to adenosine monophosphate (AMP) and fumarate. In Pyrococcus abyssi (strain GE5 / Orsay), this protein is Adenylosuccinate lyase (purB).